The following is a 165-amino-acid chain: Large ribosomal subunit protein uL10 (165 aa).

An N6-acetyllysine mark is found at lysine 37 and lysine 105.

This sequence belongs to the universal ribosomal protein uL10 family. As to quaternary structure, part of the ribosomal stalk of the 50S ribosomal subunit. The N-terminus interacts with L11 and the large rRNA to form the base of the stalk. The C-terminus forms an elongated spine to which L12 dimers bind in a sequential fashion forming a multimeric L10(L12)X complex.

Functionally, protein L10 is also a translational repressor protein. It controls the translation of the rplJL-rpoBC operon by binding to its mRNA. Forms part of the ribosomal stalk, playing a central role in the interaction of the ribosome with GTP-bound translation factors. In Escherichia coli O6:H1 (strain CFT073 / ATCC 700928 / UPEC), this protein is Large ribosomal subunit protein uL10 (rplJ).